The sequence spans 1176 residues: MDEEGAPLSEGVQVVDPDVRAHVYSLVTALGGFNGESADRYVLGDDALACLRDIKRWLKLYDEKHNRMDVARCLGEANLVNGDLLPILTLWSTSGQKSKHMSRIALACLELLVPLTWPLEVHSEMTVNHHRHTPYLQQAQVLYKRGILSHGSGSILRTIIRIGLPSMAVPRSERTTRDEGILKLMLYFLRNIAVISPNARLAAEGDEEETSRSATINAFQNQDAFALLLTMCSNVGEDFSLQDVVLLEILFHIVKGVNVEKLFMNDAQRKAKRTDELGELLQKESSLRREYAKNAPTRHGRFGTMIWVKRDDAKVSTVSGQDVLKDSQTTLHKMDQSKKWNKPQIRRRAAEVTANNDFNTPVNINSTATKNLRMFVEEFLDSGFNPLFTHVRKAIEREADRVMDINTRQFFYTVAWFLEAERVRRAHQREKRHLGDTPLKEIEPDSFALVASVLNQETFVFLNRSMQYSYDNKDVEDLTAEMRCFTQILLTVQEMAQSPLEEDQEIADNIQNRIFYEETTHDRIVAIVRGYKDQGFGYLDACTELAHVFLRMLEHYSKENVDMHVRSRRRAKRKAKQAKQADIEGDDEEEASEEEDLMDVERISKERKFDFRRFAAKFCNQSCVDTFIAFTKYYRELNVDQLKRAHRYFYRIAFKQEMSVLLFRLDIINLFYRMIKGPGALDSNKPIFKEWEELVRQIIRRMIKKIDQRPALITELLFSKINSTVFYLEYGHEKQTISASKRPPAELEVEPREAKTIDEKIRIVVHVMVKDEHTDLVKWVSDVLNSAADEREAWESQEQHSGGQKAPNPMIPVKSDNESCQKAMFSNAKLRLLMSLVRFERLGMEDVPGASWVVPSSLNSQELRHTRSIIEQCLTEPVTENSDRDLSQLIRRKSGNNTRRDRDDQMANVDFGSDSEGDDNVPDGPLFPPNPRSRANALEQLKKQRKKRRKQAGEEEEPDEEDLEARRRARLENALARQAKIKSDLYIHASDEETDEEADQEFFRLEEQRRKEQAERIRKALLHGVVEEVSENSRKKSSGRKRQSDQYTASTADSQSKRQRRLQQTEGLDGNDDLVVAGTEARSPDSLGQGSPSLKGANDVEDTLVTSEENELDFDDDLAFSRNRTRDKVLSAENDDSDTEPPAPDTIDEDGEEAAAVAAPPRRRVRAGFVIESDSE.

5 disordered regions span residues 569–597 (RRAK…EEDL), 791–815 (REAW…PVKS), 879–965 (TENS…DLEA), 977–1000 (RQAK…EADQ), and 1021–1159 (LLHG…AVAA). Over residues 583–597 (IEGDDEEEASEEEDL) the composition is skewed to acidic residues. Residues 954–963 (EEEEPDEEDL) show a composition bias toward acidic residues. Basic and acidic residues predominate over residues 981 to 991 (IKSDLYIHASD). Over residues 1045–1054 (DQYTASTADS) the composition is skewed to polar residues. Positions 1108–1118 (EENELDFDDDL) are enriched in acidic residues.

The protein belongs to the timeless family. Component of the fork protection complex (FPC) consisting of tof1 and csm3.

Its subcellular location is the nucleus. Forms a fork protection complex (FPC) with csm3 and which is required for chromosome segregation during meiosis and DNA damage repair. FPC coordinates leading and lagging strand synthesis and moves with the replication fork. FPC stabilizes replication forks in a configuration that is recognized by replication checkpoint sensors. This chain is Topoisomerase 1-associated factor 1 (tof1), found in Aspergillus fumigatus (strain ATCC MYA-4609 / CBS 101355 / FGSC A1100 / Af293) (Neosartorya fumigata).